We begin with the raw amino-acid sequence, 122 residues long: Small ribosomal subunit protein uS13 (122 aa).

Residues 99–122 (RGQRTHTNARTRKGPAKAIAGKKK) form a disordered region.

The protein belongs to the universal ribosomal protein uS13 family. As to quaternary structure, part of the 30S ribosomal subunit. Forms a loose heterodimer with protein S19. Forms two bridges to the 50S subunit in the 70S ribosome.

Functionally, located at the top of the head of the 30S subunit, it contacts several helices of the 16S rRNA. In the 70S ribosome it contacts the 23S rRNA (bridge B1a) and protein L5 of the 50S subunit (bridge B1b), connecting the 2 subunits; these bridges are implicated in subunit movement. Contacts the tRNAs in the A and P-sites. In Bradyrhizobium sp. (strain ORS 278), this protein is Small ribosomal subunit protein uS13.